Here is a 278-residue protein sequence, read N- to C-terminus: MKYIGAHVSASGGVEFAPVNAHEIGANAFALFTKNQRQWVSKPLTEDSIRLFKENCEKFGFAPEYILPHDSYLINLGHPEEEGLTKSRAAFLDEMQRCEQLGLKLLNFHPGSHLNKISVEECLDRIAESINLALEKTKGVTAVIENTAGQGSNLGNEFWQLKYIIDRVEDKSRVGVCLDTCHTFTAGYDFLNDYDDVFGEFGEVVGFEYLRGMHLNDSKKELGSRVDRHDSIGKGLIGFAFFEKLMKDPRFDNMPLILETIDETLWPEEIAWLREQTQ.

Positions 69, 109, 145, 179, 182, 214, 227, 229, and 259 each coordinate Zn(2+).

The protein belongs to the AP endonuclease 2 family. The cofactor is Zn(2+).

The catalysed reaction is Endonucleolytic cleavage to 5'-phosphooligonucleotide end-products.. In terms of biological role, endonuclease IV plays a role in DNA repair. It cleaves phosphodiester bonds at apurinic or apyrimidinic (AP) sites, generating a 3'-hydroxyl group and a 5'-terminal sugar phosphate. In Bacteroides fragilis (strain ATCC 25285 / DSM 2151 / CCUG 4856 / JCM 11019 / LMG 10263 / NCTC 9343 / Onslow / VPI 2553 / EN-2), this protein is Probable endonuclease 4.